We begin with the raw amino-acid sequence, 138 residues long: UPF0201 protein PH1010 (138 aa).

This sequence belongs to the UPF0201 family.

The protein is UPF0201 protein PH1010 of Pyrococcus horikoshii (strain ATCC 700860 / DSM 12428 / JCM 9974 / NBRC 100139 / OT-3).